Reading from the N-terminus, the 133-residue chain is Fatty acid-binding protein, heart (133 aa).

At V2 the chain carries N-acetylvaline. T8 carries the post-translational modification Phosphothreonine. Y20 is subject to Phosphotyrosine; by Tyr-kinases. Position 23 is a phosphoserine (S23). The residue at position 30 (T30) is a Phosphothreonine. At S83 the chain carries Phosphoserine. 127-129 (RTY) contacts (9Z)-octadecenoate. Hexadecanoate is bound at residue 127 to 129 (RTY). 127 to 129 (RTY) serves as a coordination point for octadecanoate.

This sequence belongs to the calycin superfamily. Fatty-acid binding protein (FABP) family.

It localises to the cytoplasm. In terms of biological role, FABPs are thought to play a role in the intracellular transport of long-chain fatty acids and their acyl-CoA esters. The protein is Fatty acid-binding protein, heart (FABP3) of Bos mutus grunniens (Wild yak).